The primary structure comprises 342 residues: 6-hydroxytryprostatin B O-methyltransferase (342 aa).

Residue aspartate 201 participates in S-adenosyl-L-methionine binding. Residue histidine 244 is the Proton acceptor of the active site.

The protein belongs to the class I-like SAM-binding methyltransferase superfamily. Cation-independent O-methyltransferase family. Homodimer.

The catalysed reaction is 6-hydroxytryprostatin B + S-adenosyl-L-methionine = tryprostatin A + S-adenosyl-L-homocysteine + H(+). Its pathway is mycotoxin biosynthesis. 6-hydroxytryprostatin B O-methyltransferase; part of the gene cluster that mediates the biosynthesis of fumitremorgins, indole alkaloids that carry not only intriguing chemical structures, but also interesting biological and pharmacological activities. The biosynthesis of fumitremorgin-type alkaloids begins by condensation of the two amino acids L-tryptophan and L-proline to brevianamide F, catalyzed by the non-ribosomal peptide synthetase ftmA. Brevianamide F is then prenylated by the prenyltransferase ftmPT1/ftmB in the presence of dimethylallyl diphosphate, resulting in the formation of tryprostatin B. The three cytochrome P450 monooxygenases, ftmP450-1/ftmC, ftmP450-2/ftmE and ftmP450-3/FtmG, are responsible for the conversion of tryprostatin B to 6-hydroxytryprostatin B, tryprostatin A to fumitremorgin C and fumitremorgin C to 12,13-dihydroxyfumitremorgin C, respectively. The putative methyltransferase ftmMT/ftmD is expected for the conversion of 6-hydroxytryprostatin B to tryprostatin A. FtmPT2/FtmH catalyzes the prenylation of 12,13-dihydroxyfumitre-morgin C in the presence of dimethylallyl diphosphate, resulting in the formation of fumitremorgin B. Fumitremorgin B is further converted to verruculogen by ftmOx1/ftmF via the insertion of an endoperoxide bond between the two prenyl moieties. In some fungal species, verruculogen is further converted to fumitremorgin A, but the enzymes involved in this step have not been identified yet. The polypeptide is 6-hydroxytryprostatin B O-methyltransferase (Aspergillus fumigatus (strain ATCC MYA-4609 / CBS 101355 / FGSC A1100 / Af293) (Neosartorya fumigata)).